Here is a 201-residue protein sequence, read N- to C-terminus: dITP/XTP pyrophosphatase (201 aa).

Position 8–13 (8–13) interacts with substrate; the sequence is TNNENK. Positions 41 and 73 each coordinate Mg(2+). D73 functions as the Proton acceptor in the catalytic mechanism. Residues S74, 154–157, K177, and 182–183 each bind substrate; these read FGYD and HR.

The protein belongs to the HAM1 NTPase family. In terms of assembly, homodimer. It depends on Mg(2+) as a cofactor.

The enzyme catalyses XTP + H2O = XMP + diphosphate + H(+). The catalysed reaction is dITP + H2O = dIMP + diphosphate + H(+). It carries out the reaction ITP + H2O = IMP + diphosphate + H(+). Pyrophosphatase that catalyzes the hydrolysis of nucleoside triphosphates to their monophosphate derivatives, with a high preference for the non-canonical purine nucleotides XTP (xanthosine triphosphate), dITP (deoxyinosine triphosphate) and ITP. Seems to function as a house-cleaning enzyme that removes non-canonical purine nucleotides from the nucleotide pool, thus preventing their incorporation into DNA/RNA and avoiding chromosomal lesions. The sequence is that of dITP/XTP pyrophosphatase from Clostridium tetani (strain Massachusetts / E88).